Consider the following 342-residue polypeptide: Trans-3-hydroxy-L-proline dehydratase (342 aa).

The active-site Proton acceptor is the serine 90. Residues 91 to 92 (GS), aspartate 252, and 257 to 258 (GT) contribute to the substrate site.

This sequence belongs to the proline racemase family.

The catalysed reaction is trans-3-hydroxy-L-proline = 1-pyrroline-2-carboxylate + H2O. In terms of biological role, catalyzes the dehydration of trans-3-hydroxy-L-proline (t3LHyp) to Delta(1)-pyrroline-2-carboxylate (Pyr2C). Can also catalyze the epimerization of trans-4-hydroxy-L-proline (t4LHyp) to cis-4-hydroxy-D-proline (c4DHyp), albeit with 150-fold lower efficiency. May be involved in the degradation pathway that converts t3LHyp to L-proline, which would allow R.meliloti to grow on t3LHyp as a sole carbon source. Displays no proline racemase activity. The chain is Trans-3-hydroxy-L-proline dehydratase from Rhizobium meliloti (strain 1021) (Ensifer meliloti).